We begin with the raw amino-acid sequence, 223 residues long: Ubiquitin carboxyl-terminal hydrolase isozyme L1 (223 aa).

Position 1 is an N-acetylmethionine (methionine 1). The UCH catalytic domain occupies 2 to 221; the sequence is QLKPMEINPE…VRFSAVALCK (220 aa). The tract at residues 5–10 is interaction with ubiquitin; it reads PMEINP. Cysteine 90 functions as the Nucleophile in the catalytic mechanism. Phosphoserine is present on serine 125. The Proton donor role is filled by histidine 161. An interaction with ubiquitin region spans residues 211-216; sequence EVRFSA. The S-farnesyl cysteine moiety is linked to residue cysteine 220. A propeptide spans 221–223 (removed in mature form); it reads KAA.

The protein belongs to the peptidase C12 family. As to quaternary structure, monomer. Homodimer. Interacts with COPS5 and SNCA. Post-translationally, O-glycosylated. As to expression, expressed in brain, where it is found in neurons but not in oligodendrocytes or astrocytes. Found in the ganglion cell layer and the inner nuclear layer of the retina (at protein level). Expressed in brain and testis. In the brain, expression is at its lowest in replaceable neurons of hippocampus and olfactory bulb. Highly expressed in senescent pituitary. In skeletal muscle, primarily expressed in oxidative muscle fibers.

The protein resides in the cytoplasm. It localises to the endoplasmic reticulum membrane. The enzyme catalyses Thiol-dependent hydrolysis of ester, thioester, amide, peptide and isopeptide bonds formed by the C-terminal Gly of ubiquitin (a 76-residue protein attached to proteins as an intracellular targeting signal).. Functionally, deubiquitinase that plays a role in the regulation of several processes such as maintenance of synaptic function, cardiac function, inflammatory response or osteoclastogenesis. Abrogates the ubiquitination of multiple proteins including WWTR1/TAZ, EGFR, HIF1A and beta-site amyloid precursor protein cleaving enzyme 1/BACE1. In addition, recognizes and hydrolyzes a peptide bond at the C-terminal glycine of ubiquitin to maintain a stable pool of monoubiquitin that is a key requirement for the ubiquitin-proteasome and the autophagy-lysosome pathways. Regulates amyloid precursor protein/APP processing by promoting BACE1 degradation resulting in decreased amyloid beta production. Plays a role in the immune response by regulating the ability of MHC I molecules to reach cross-presentation compartments competent for generating Ag-MHC I complexes. Mediates the 'Lys-48'-linked deubiquitination of the transcriptional coactivator WWTR1/TAZ leading to its stabilization and inhibition of osteoclastogenesis. Deubiquitinates and stabilizes epidermal growth factor receptor EGFR to prevent its degradation and to activate its downstream mediators. Modulates oxidative activity in skeletal muscle by regulating key mitochondrial oxidative proteins. Enhances the activity of hypoxia-inducible factor 1-alpha/HIF1A by abrogateing its VHL E3 ligase-mediated ubiquitination and consequently inhibiting its degradation. The sequence is that of Ubiquitin carboxyl-terminal hydrolase isozyme L1 (Uchl1) from Mus musculus (Mouse).